Consider the following 431-residue polypeptide: uncharacterized protein (431 aa).

The Peptidase S8 domain occupies 1-258 (MPSQMREAIT…HGLIDLERAG (258 aa)).

The protein belongs to the peptidase S8 family.

This is an uncharacterized protein from Sinorhizobium fredii (strain NBRC 101917 / NGR234).